The chain runs to 390 residues: Protein-glutamate methylesterase/protein-glutamine glutaminase 1 (390 aa).

The 118-residue stretch at 4–121 folds into the Response regulatory domain; the sequence is KVLVVDDSGF…SRNPQKVKQL (118 aa). A 4-aspartylphosphate modification is found at D55. Residues 132-186 are compositionally biased toward low complexity; sequence SNRRSSGIGSASAASPAPAAPAPSTLSSRAPAPSAAAPARAVPSRTVAPAAAPAA. Residues 132–201 are disordered; sequence SNRRSSGIGS…PAHPTTTGTA (70 aa). Residues 195–387 form the CheB-type methylesterase domain; sequence PTTTGTAKRK…LDDIGRHLVE (193 aa). Residues S214, H241, and D334 contribute to the active site.

The protein belongs to the CheB family. In terms of processing, phosphorylated by CheA. Phosphorylation of the N-terminal regulatory domain activates the methylesterase activity.

The protein resides in the cytoplasm. It catalyses the reaction [protein]-L-glutamate 5-O-methyl ester + H2O = L-glutamyl-[protein] + methanol + H(+). It carries out the reaction L-glutaminyl-[protein] + H2O = L-glutamyl-[protein] + NH4(+). Its function is as follows. Involved in chemotaxis. Part of a chemotaxis signal transduction system that modulates chemotaxis in response to various stimuli. Catalyzes the demethylation of specific methylglutamate residues introduced into the chemoreceptors (methyl-accepting chemotaxis proteins or MCP) by CheR. Also mediates the irreversible deamidation of specific glutamine residues to glutamic acid. The sequence is that of Protein-glutamate methylesterase/protein-glutamine glutaminase 1 from Pseudomonas syringae pv. tomato (strain ATCC BAA-871 / DC3000).